An 81-amino-acid chain; its full sequence is Photosystem I iron-sulfur center (81 aa).

2 consecutive 4Fe-4S ferredoxin-type domains span residues 2-31 and 39-68; these read AHSV…MIPW and IASA…VRVY. 8 residues coordinate [4Fe-4S] cluster: C11, C14, C17, C21, C48, C51, C54, and C58.

As to quaternary structure, the eukaryotic PSI reaction center is composed of at least 11 subunits. Requires [4Fe-4S] cluster as cofactor.

The protein localises to the plastid. The protein resides in the chloroplast thylakoid membrane. It carries out the reaction reduced [plastocyanin] + hnu + oxidized [2Fe-2S]-[ferredoxin] = oxidized [plastocyanin] + reduced [2Fe-2S]-[ferredoxin]. In terms of biological role, apoprotein for the two 4Fe-4S centers FA and FB of photosystem I (PSI); essential for photochemical activity. FB is the terminal electron acceptor of PSI, donating electrons to ferredoxin. The C-terminus interacts with PsaA/B/D and helps assemble the protein into the PSI complex. Required for binding of PsaD and PsaE to PSI. PSI is a plastocyanin-ferredoxin oxidoreductase, converting photonic excitation into a charge separation, which transfers an electron from the donor P700 chlorophyll pair to the spectroscopically characterized acceptors A0, A1, FX, FA and FB in turn. The polypeptide is Photosystem I iron-sulfur center (Cycas taitungensis (Prince sago)).